Reading from the N-terminus, the 962-residue chain is Phosphatidylinositol 3,4,5-trisphosphate 3-phosphatase and dual-specificity protein phosphatase daf-18 (962 aa).

The disordered stretch occupies residues 1–37 (MVTPPPDVPSTSTRSMARDLQENPNRQPGEPRVSEPY). One can recognise a Phosphatase tensin-type domain in the interval 58 to 230 (CRTEYQNIDL…YYYHKLRERE (173 aa)). The active-site Phosphocysteine intermediate is the cysteine 169. The C2 tensin-type domain maps to 234–530 (LPLRMQLIGV…GMKLHVVLRC (297 aa)). 2 disordered regions span residues 382-416 (DTSIGRKNGMRRNETPMRKIDPETGNEFESPWQIV) and 689-731 (IENT…RLPD). The segment covering 392–403 (RRNETPMRKIDP) has biased composition (basic and acidic residues). A compositionally biased stretch (low complexity) spans 692 to 704 (TGPSTSGSSAPGT). The span at 706 to 720 (KKTEASQSDKVKPAT) shows a compositional bias: basic and acidic residues.

The protein belongs to the PTEN phosphatase protein family. Interacts (via C-terminus) with vab-1 (via kinase domain); the interaction is independent of vab-1 kinase activity. Interacts with arr-1 and mpz-1; the interaction may inhibit daf-18. Interacts (via C-terminus) with daf-2 (via kinase domain). Phosphorylated by vab-1 on tyrosine residues which may promote daf-18 degradation. As to expression, expressed in embryo, larvae and in adult germline (at protein level). Expressed at equal levels in the 6 vulva precursor cells (VPCs) of L2 larvae and in the descendant cells of the induced VPCs (at protein level). Expressed in the uterus (at protein level). Expressed in the Z2/Z3 germline precursors, oocytes, several amphid neurons and weakly in the nerve cord (at protein level).

The protein localises to the perikaryon. Its subcellular location is the cell membrane. It is found in the cell projection. It localises to the axon. The protein resides in the dendrite. The protein localises to the cytoplasm. Its subcellular location is the nucleus. The enzyme catalyses a 1,2-diacyl-sn-glycero-3-phospho-(1D-myo-inositol-3,4,5-trisphosphate) + H2O = a 1,2-diacyl-sn-glycero-3-phospho-(1D-myo-inositol-4,5-bisphosphate) + phosphate. The catalysed reaction is O-phospho-L-seryl-[protein] + H2O = L-seryl-[protein] + phosphate. It carries out the reaction O-phospho-L-threonyl-[protein] + H2O = L-threonyl-[protein] + phosphate. It catalyses the reaction O-phospho-L-tyrosyl-[protein] + H2O = L-tyrosyl-[protein] + phosphate. The enzyme catalyses 1,2-dioctanoyl-sn-glycero-3-phospho-(1D-myo-inositol-3,4,5-trisphosphate) + H2O = 1,2-dioctanoyl-sn-glycero-3-phospho-(1D-myo-inositol-4,5-bisphosphate) + phosphate. The catalysed reaction is 1,2-dihexadecanoyl-sn-glycero-3-phospho-(1D-myo-inositol-3,4,5-trisphosphate) + H2O = 1,2-dihexadecanoyl-sn-glycero-3-phospho-(1D-myo-inositol-4,5-bisphosphate) + phosphate. Acts as a dual-specificity protein phosphatase, dephosphorylating tyrosine-, serine- and threonine-phosphorylated proteins. Also acts as a lipid phosphatase, removing the phosphate in the D3 position of the inositol ring from phosphatidylinositol 3,4,5-trisphosphate. By dephosphorylating PtdIns(3,4,5)P3 antagonizes PtdIns(3,4,5)P3 production by age-1/PI3K and thus, negatively regulates daf-2-mediated processes including dauer formation, longevity, fat metabolism, chemotaxis towards salt, thermotolerance and axon guidance. Similarly, promotes apoptosis during embryonic development by suppressing the recruitment of the prosurvival kinases akt-1/2 to the plasma membrane. In addition, regulates Z2/Z3 germline precursor cell cycle by maintaining them arrested at the G2 stage and by controlling their growth during L1 diapause. After sperm depletion in larvae and adult hermaphrodites, promotes germline stem cell quiescence and oocyte accumulation. By dephosphorylating ephrin-like receptor vab-1 on tyrosine residues, negatively regulates oocyte maturation downstream of vab-1 and upstream of mpk-1, independently of daf-2. Plays a role in postembryonic muscle arm extensions. Required for neurite outgrowth during AIY interneuron embryonic development. Mainly independently of daf-2, negatively regulates vulva induction probably by inhibiting mpk-1 phosphorylation. Both lipid and protein phosphatase activities are required for the regulation of vulva induction. Plays a role in gonad and germline development following the L1 diapause. The chain is Phosphatidylinositol 3,4,5-trisphosphate 3-phosphatase and dual-specificity protein phosphatase daf-18 from Caenorhabditis elegans.